The following is a 600-amino-acid chain: Proline--tRNA ligase (600 aa).

Belongs to the class-II aminoacyl-tRNA synthetase family. ProS type 1 subfamily. Homodimer.

It localises to the cytoplasm. The enzyme catalyses tRNA(Pro) + L-proline + ATP = L-prolyl-tRNA(Pro) + AMP + diphosphate. Its function is as follows. Catalyzes the attachment of proline to tRNA(Pro) in a two-step reaction: proline is first activated by ATP to form Pro-AMP and then transferred to the acceptor end of tRNA(Pro). As ProRS can inadvertently accommodate and process non-cognate amino acids such as alanine and cysteine, to avoid such errors it has two additional distinct editing activities against alanine. One activity is designated as 'pretransfer' editing and involves the tRNA(Pro)-independent hydrolysis of activated Ala-AMP. The other activity is designated 'posttransfer' editing and involves deacylation of mischarged Ala-tRNA(Pro). The misacylated Cys-tRNA(Pro) is not edited by ProRS. The sequence is that of Proline--tRNA ligase from Prochlorococcus marinus subsp. pastoris (strain CCMP1986 / NIES-2087 / MED4).